A 270-amino-acid chain; its full sequence is Non-homologous end joining protein Ku (270 aa).

The 185-residue stretch at Ser10–Thr194 folds into the Ku domain.

Belongs to the prokaryotic Ku family. As to quaternary structure, homodimer. Interacts with LigD.

Functionally, with LigD forms a non-homologous end joining (NHEJ) DNA repair enzyme, which repairs dsDNA breaks with reduced fidelity. Binds linear dsDNA with 5'- and 3'- overhangs but not closed circular dsDNA nor ssDNA. Recruits and stimulates the ligase activity of LigD. The protein is Non-homologous end joining protein Ku of Bacillus thuringiensis subsp. konkukian (strain 97-27).